Reading from the N-terminus, the 549-residue chain is Chaperonin GroEL (549 aa).

Residues 29 to 32, lysine 50, 86 to 90, glycine 414, 477 to 479, and aspartate 493 each bind ATP; these read TLGP, DGTTT, and NAA.

The protein belongs to the chaperonin (HSP60) family. Forms a cylinder of 14 subunits composed of two heptameric rings stacked back-to-back. Interacts with the co-chaperonin GroES.

It localises to the cytoplasm. It catalyses the reaction ATP + H2O + a folded polypeptide = ADP + phosphate + an unfolded polypeptide.. Functionally, together with its co-chaperonin GroES, plays an essential role in assisting protein folding. The GroEL-GroES system forms a nano-cage that allows encapsulation of the non-native substrate proteins and provides a physical environment optimized to promote and accelerate protein folding. This chain is Chaperonin GroEL, found in Geotalea uraniireducens (strain Rf4) (Geobacter uraniireducens).